Consider the following 426-residue polypeptide: Inositol hexakisphosphate kinase 2 (426 aa).

ATP contacts are provided by residues glutamate 207 to leucine 209 and aspartate 220. Substrate is bound by residues lysine 222 and lysine 236–lysine 243. Aspartate 383 contacts ATP. Histidine 386 lines the substrate pocket.

Belongs to the inositol phosphokinase (IPK) family.

The protein localises to the nucleus. It carries out the reaction 1D-myo-inositol hexakisphosphate + ATP = 5-diphospho-1D-myo-inositol 1,2,3,4,6-pentakisphosphate + ADP. It functions in the pathway phospholipid metabolism; phosphatidylinositol metabolism. Its activity is regulated as follows. Inhibited by flavonoids, including myricetin, quercetin, luteolin, isorhamnetin, rhamnetin, kaempferol, diosmetin and apigenin. Converts inositol hexakisphosphate (InsP6) to diphosphoinositol pentakisphosphate (InsP7/PP-InsP5). The protein is Inositol hexakisphosphate kinase 2 of Homo sapiens (Human).